The following is a 737-amino-acid chain: Exostosin-1c (737 aa).

Over 1–6 (MQARKK) the chain is Cytoplasmic. A helical; Signal-anchor for type II membrane protein membrane pass occupies residues 7-27 (YVLLGLCTCCWILLYYWAGLQ). The Lumenal segment spans residues 28-737 (ERLLGLITHR…RKRYKDLERV (710 aa)). 2 N-linked (GlcNAc...) asparagine glycosylation sites follow: N194 and N322. The UDP-N-acetyl-alpha-D-glucosamine site is built by R432, R540, D556, E557, D558, E644, D645, and R692. Position 558 (D558) interacts with Mn(2+). A disulfide bridge links C643 with C695. Residue D645 is part of the active site.

It belongs to the glycosyltransferase 47 family. The cofactor is Mn(2+).

It is found in the endoplasmic reticulum membrane. The enzyme catalyses 3-O-{[(1-&gt;4)-beta-D-GlcA-(1-&gt;4)-alpha-D-GlcNAc](n)-(1-&gt;4)-beta-D-GlcA-(1-&gt;3)-beta-D-Gal-(1-&gt;3)-beta-D-Gal-(1-&gt;4)-beta-D-Xyl}-L-seryl-[protein] + UDP-N-acetyl-alpha-D-glucosamine = 3-O-{alpha-D-GlcNAc-[(1-&gt;4)-beta-D-GlcA-(1-&gt;4)-alpha-D-GlcNAc](n)-(1-&gt;4)-beta-D-GlcA-(1-&gt;3)-beta-D-Gal-(1-&gt;3)-beta-D-Gal-(1-&gt;4)-beta-D-Xyl}-L-seryl-[protein] + UDP + H(+). It carries out the reaction 3-O-{alpha-D-GlcNAc-[(1-&gt;4)-beta-D-GlcA-(1-&gt;4)-alpha-D-GlcNAc](n)-(1-&gt;4)-beta-D-GlcA-(1-&gt;3)-beta-D-Gal-(1-&gt;3)-beta-D-Gal-(1-&gt;4)-beta-D-Xyl}-L-seryl-[protein] + UDP-alpha-D-glucuronate = 3-O-{[(1-&gt;4)-beta-D-GlcA-(1-&gt;4)-alpha-D-GlcNAc](n+1)-(1-&gt;4)-beta-D-GlcA-(1-&gt;3)-beta-D-Gal-(1-&gt;3)-beta-D-Gal-(1-&gt;4)-beta-D-Xyl}-L-seryl-[protein] + UDP + H(+). The protein operates within protein modification; protein glycosylation. In terms of biological role, glycosyltransferase required for the biosynthesis of heparan-sulfate. The polypeptide is Exostosin-1c (ext1c) (Danio rerio (Zebrafish)).